Reading from the N-terminus, the 793-residue chain is DnaJ homolog subfamily C member 10 (793 aa).

An N-terminal signal peptide occupies residues 1 to 32 (MGVWLSKDDYIRDLKRIILCFLIVYMAILVGT). One can recognise a J domain in the interval 35–100 (DFYSLLGVSK…DLRKKYDKYG (66 aa)). In terms of domain architecture, Thioredoxin 1 spans 130 to 232 (EIITLERREF…ESLVSFAMQH (103 aa)). Cysteine 158 and cysteine 161 form a disulfide bridge. Trxb stretches follow at residues 235 to 350 (STVT…LPDF) and 348 to 463 (PDFE…PQNF). 3 Thioredoxin domains span residues 454 to 553 (HVTT…IEDL), 557 to 662 (SVVS…SLRI), and 671 to 778 (VSTG…INEK). Cysteines 480 and 483 form a disulfide. N-linked (GlcNAc...) asparagine glycosylation occurs at asparagine 530. Disulfide bonds link cysteine 588–cysteine 591 and cysteine 700–cysteine 703. The short motif at 790–793 (KDEL) is the Prevents secretion from ER element.

As to quaternary structure, interacts with HSPA5 (via its J domain). Interacts with EDEM1.

Its subcellular location is the endoplasmic reticulum lumen. Functionally, endoplasmic reticulum disulfide reductase involved both in the correct folding of proteins and degradation of misfolded proteins. Required for efficient folding of proteins in the endoplasmic reticulum by catalyzing the removal of non-native disulfide bonds formed during the folding of proteins, such as LDLR. Also involved in endoplasmic reticulum-associated degradation (ERAD) by reducing incorrect disulfide bonds in misfolded glycoproteins recognized by EDEM1. Interaction with HSPA5 is required its activity, not for the disulfide reductase activity, but to facilitate the release of DNAJC10 from its substrate. Promotes apoptotic signaling pathway in response to endoplasmic reticulum stress. This chain is DnaJ homolog subfamily C member 10 (DNAJC10), found in Pongo abelii (Sumatran orangutan).